The chain runs to 461 residues: Homocitrate synthase (461 aa).

Positions V4 to Q259 constitute a Pyruvate carboxyltransferase domain. R12 provides a ligand contact to 2-oxoglutarate. E13 is a binding site for Mg(2+). H76, R136, and T170 together coordinate 2-oxoglutarate. Mg(2+) is bound by residues H198 and H200. The active-site Proton acceptor is the H292.

Belongs to the alpha-IPM synthase/homocitrate synthase family. Homocitrate synthase LYS20/LYS21 subfamily. Mg(2+) is required as a cofactor. The cofactor is Mn(2+).

The catalysed reaction is acetyl-CoA + 2-oxoglutarate + H2O = (2R)-homocitrate + CoA + H(+). Its pathway is amino-acid biosynthesis; L-lysine biosynthesis via AAA pathway; L-alpha-aminoadipate from 2-oxoglutarate: step 1/5. Its function is as follows. Catalyzes the aldol-type condensation of 2-oxoglutarate with acetyl-CoA to yield homocitrate. Carries out the first step of the alpha-aminoadipate (AAA) lysine biosynthesis pathway. The protein is Homocitrate synthase of Saccharolobus islandicus (strain Y.N.15.51 / Yellowstone #2) (Sulfolobus islandicus).